A 124-amino-acid polypeptide reads, in one-letter code: Small ribosomal subunit protein uS12 (124 aa).

D89 carries the 3-methylthioaspartic acid modification.

Belongs to the universal ribosomal protein uS12 family. Part of the 30S ribosomal subunit. Contacts proteins S8 and S17. May interact with IF1 in the 30S initiation complex.

Its function is as follows. With S4 and S5 plays an important role in translational accuracy. Functionally, interacts with and stabilizes bases of the 16S rRNA that are involved in tRNA selection in the A site and with the mRNA backbone. Located at the interface of the 30S and 50S subunits, it traverses the body of the 30S subunit contacting proteins on the other side and probably holding the rRNA structure together. The combined cluster of proteins S8, S12 and S17 appears to hold together the shoulder and platform of the 30S subunit. This chain is Small ribosomal subunit protein uS12, found in Yersinia pestis (strain Pestoides F).